Reading from the N-terminus, the 330-residue chain is Malate dehydrogenase (330 aa).

Position 12–18 (12–18) interacts with NAD(+); that stretch reads GAAGQIG. Substrate-binding residues include R93 and R99. Residues N106, Q113, and 130-132 each bind NAD(+); that span reads VGN. Substrate is bound by residues N132 and R163. H188 acts as the Proton acceptor in catalysis.

Belongs to the LDH/MDH superfamily. MDH type 2 family.

It carries out the reaction (S)-malate + NAD(+) = oxaloacetate + NADH + H(+). In terms of biological role, catalyzes the reversible oxidation of malate to oxaloacetate. The polypeptide is Malate dehydrogenase (Legionella pneumophila subsp. pneumophila (strain Philadelphia 1 / ATCC 33152 / DSM 7513)).